The sequence spans 92 residues: Small ribosomal subunit protein uS19 (92 aa).

This sequence belongs to the universal ribosomal protein uS19 family.

Its function is as follows. Protein S19 forms a complex with S13 that binds strongly to the 16S ribosomal RNA. In Cyanothece sp. (strain PCC 7425 / ATCC 29141), this protein is Small ribosomal subunit protein uS19.